A 335-amino-acid chain; its full sequence is Cholinephosphotransferase 1 (335 aa).

The next 2 helical transmembrane spans lie at 53 to 73 and 84 to 108; these read PNAI…PLIA and FWAY…GKQA. N54 lines the CDP-choline pocket. D101 and D104 together coordinate Mg(2+). R109 contributes to the CDP-choline binding site. Transmembrane regions (helical) follow at residues 116–140, 151–169, 181–197, 213–238, 267–276, and 284–313; these read PLGE…SCIA, FFCC…WQTY, VTEV…VSAF, ELKF…RIIF, IGPGLLFLDQ, and EYVV…IAAH. D122 lines the Mg(2+) pocket. H123 acts as the Proton acceptor in catalysis. Residue D126 participates in Mg(2+) binding.

This sequence belongs to the CDP-alcohol phosphatidyltransferase class-I family. Mg(2+) is required as a cofactor. Mn(2+) serves as cofactor.

It localises to the golgi apparatus membrane. The enzyme catalyses CDP-choline + a 1,2-diacyl-sn-glycerol = a 1,2-diacyl-sn-glycero-3-phosphocholine + CMP + H(+). It carries out the reaction 1-octadecanoyl-2-(5Z,8Z,11Z,14Z-eicosatetraenoyl)-sn-glycerol + CDP-choline = 1-octadecanoyl-2-(5Z,8Z,11Z,14Z-eicosatetraenoyl)-sn-glycero-3-phosphocholine + CMP + H(+). It catalyses the reaction 1-hexadecanoyl-2-(9Z-octadecenoyl)-sn-glycerol + CDP-choline = 1-hexadecanoyl-2-(9Z-octadecenoyl)-sn-glycero-3-phosphocholine + CMP + H(+). The catalysed reaction is 1-hexadecanoyl-2-(4Z,7Z,10Z,13Z,16Z,19Z-docosahexaenoyl)-sn-glycerol + CDP-choline = 1-hexadecanoyl-2-(4Z,7Z,10Z,13Z,16Z,19Z-docosahexaenoyl)-sn-glycero-3-phosphocholine + CMP + H(+). The enzyme catalyses 1,2-dioctanoyl-sn-glycerol + CDP-choline = 1,2-dioctanoyl-sn-glycero-3-phosphocholine + CMP + H(+). The protein operates within phospholipid metabolism; phosphatidylcholine biosynthesis; phosphatidylcholine from phosphocholine: step 2/2. Its function is as follows. Catalyzes the final step of de novo phosphatidylcholine (PC) synthesis, i.e. the transfer of choline phosphate from CDP-choline to the free hydroxyl of a diacylglycerol (DAG), producing a PC. It thereby plays a central role in the formation and maintenance of vesicular membranes. The polypeptide is Cholinephosphotransferase 1 (CHPT1) (Gallus gallus (Chicken)).